We begin with the raw amino-acid sequence, 133 residues long: Large ribosomal subunit protein bL20 (133 aa).

This sequence belongs to the bacterial ribosomal protein bL20 family.

Functionally, binds directly to 23S ribosomal RNA and is necessary for the in vitro assembly process of the 50S ribosomal subunit. It is not involved in the protein synthesizing functions of that subunit. The protein is Large ribosomal subunit protein bL20 of Bartonella henselae (strain ATCC 49882 / DSM 28221 / CCUG 30454 / Houston 1) (Rochalimaea henselae).